The following is a 68-amino-acid chain: Large ribosomal subunit protein uL29 (68 aa).

The tract at residues 32–68 is disordered; that stretch reads QDQLKRRTGSLDNPAERTQHRRDLARVLTVLTQKTKA. A compositionally biased stretch (basic and acidic residues) spans 45–56; it reads PAERTQHRRDLA.

The protein belongs to the universal ribosomal protein uL29 family.

The sequence is that of Large ribosomal subunit protein uL29 from Myxococcus xanthus (strain DK1622).